A 619-amino-acid polypeptide reads, in one-letter code: Dihydroxy-acid dehydratase (619 aa).

Residue aspartate 81 coordinates Mg(2+). [2Fe-2S] cluster is bound at residue cysteine 122. 2 residues coordinate Mg(2+): aspartate 123 and lysine 124. At lysine 124 the chain carries N6-carboxylysine. Cysteine 195 is a [2Fe-2S] cluster binding site. Position 491 (glutamate 491) interacts with Mg(2+). Catalysis depends on serine 517, which acts as the Proton acceptor.

It belongs to the IlvD/Edd family. As to quaternary structure, homodimer. The cofactor is [2Fe-2S] cluster. Requires Mg(2+) as cofactor.

It catalyses the reaction (2R)-2,3-dihydroxy-3-methylbutanoate = 3-methyl-2-oxobutanoate + H2O. The catalysed reaction is (2R,3R)-2,3-dihydroxy-3-methylpentanoate = (S)-3-methyl-2-oxopentanoate + H2O. The protein operates within amino-acid biosynthesis; L-isoleucine biosynthesis; L-isoleucine from 2-oxobutanoate: step 3/4. It participates in amino-acid biosynthesis; L-valine biosynthesis; L-valine from pyruvate: step 3/4. Functions in the biosynthesis of branched-chain amino acids. Catalyzes the dehydration of (2R,3R)-2,3-dihydroxy-3-methylpentanoate (2,3-dihydroxy-3-methylvalerate) into 2-oxo-3-methylpentanoate (2-oxo-3-methylvalerate) and of (2R)-2,3-dihydroxy-3-methylbutanoate (2,3-dihydroxyisovalerate) into 2-oxo-3-methylbutanoate (2-oxoisovalerate), the penultimate precursor to L-isoleucine and L-valine, respectively. This is Dihydroxy-acid dehydratase from Rhodopseudomonas palustris (strain HaA2).